A 384-amino-acid polypeptide reads, in one-letter code: Erythronate-4-phosphate dehydrogenase (384 aa).

Residues S45 and T66 each coordinate substrate. NAD(+)-binding residues include D147 and T177. Residue R210 is part of the active site. D234 is a binding site for NAD(+). E239 is a catalytic residue. H256 acts as the Proton donor in catalysis. Residue G259 participates in NAD(+) binding. Substrate is bound at residue Y260.

The protein belongs to the D-isomer specific 2-hydroxyacid dehydrogenase family. PdxB subfamily. In terms of assembly, homodimer.

Its subcellular location is the cytoplasm. The catalysed reaction is 4-phospho-D-erythronate + NAD(+) = (R)-3-hydroxy-2-oxo-4-phosphooxybutanoate + NADH + H(+). It participates in cofactor biosynthesis; pyridoxine 5'-phosphate biosynthesis; pyridoxine 5'-phosphate from D-erythrose 4-phosphate: step 2/5. Functionally, catalyzes the oxidation of erythronate-4-phosphate to 3-hydroxy-2-oxo-4-phosphonooxybutanoate. In Marinobacter nauticus (strain ATCC 700491 / DSM 11845 / VT8) (Marinobacter aquaeolei), this protein is Erythronate-4-phosphate dehydrogenase.